Consider the following 215-residue polypeptide: MRAFTTHTGLVAPMDRANVDTDLIIPKQFLKSIKRTGFGPNAFDELRYLDKGEPGQDNSSRPLNPEFPLNHARYQGASVLLARKNFGCGSSREHAPWALEEFGFRAIIAPSFADIFYNNCFKNGLLPIVLDEAVVDSLFAAMYSEEGFQIEIDLQAQTVTSAGQTYTFDVDEFRKHCLLNGFDDISLTLLDAEKIQTYEAQRRQSQPWLFNAVHQ.

The protein belongs to the LeuD family. LeuD type 1 subfamily. As to quaternary structure, heterodimer of LeuC and LeuD.

It carries out the reaction (2R,3S)-3-isopropylmalate = (2S)-2-isopropylmalate. The protein operates within amino-acid biosynthesis; L-leucine biosynthesis; L-leucine from 3-methyl-2-oxobutanoate: step 2/4. Its function is as follows. Catalyzes the isomerization between 2-isopropylmalate and 3-isopropylmalate, via the formation of 2-isopropylmaleate. The sequence is that of 3-isopropylmalate dehydratase small subunit from Teredinibacter turnerae (strain ATCC 39867 / T7901).